The sequence spans 1197 residues: MVTHNVKINKHVTRRSYSSAKEVLEIPPLTEVQTASYKWFMDKGIKEMFNDIMPIEDFAGKLSLEYVDYSLGEPKYSLKESREQAVNYAAPLHVTLRLTNKETGEIKSQDVYFGEFPLMTEYGSFVINGAERVVVSQLVRSPGIYYNEDTDKTGRVVYGTTVIPNRGAWLELDTDAKGVANIRIDRTRKLPITELIRSFGFGSDSEIQDIFGDEIDSLNLAIEKDVHKDPSMSRVGEALEDIYERLRPGEPKTIDSSRSLLAARFFDPKRYDLGNVGRYKVNKKLSLKSRLLGQTLAEDILNSDGEVVVPKDTKIDKKSMKLISPLLDEEDFHVENLQPDEEGVLPDPIKVQTIKIFSQVDPTKVIKLIGNGHIDESIHHILPADIIAGMNYFFNLQEGVGATDDIDHLGNRRIRSVGELLENQFRIGLTRMERVVRERMSIQDSDTVTPQQLINIRPVVAVVKEFFGSSQLSQFMDQTNPLGELNHKRRLSALGPGGLTRDRAGYEVRDVHYSHYGRIDPIETPEGPNIGLITSLAVYGRINEYGFIETPYRRVDWDTHKVTDKIDYLTADVEDNYTIAQANSPLNDDGSFTNPTVTARHGDNNIETPIEDVDYMDVSPKQVVAVSTAAIPFLENDDSNRALMGANMQRQAVPLVAPHSPIVGTGIEYRAAVDSGLAQIAEEKGTVEYVDGRTIKVREEDGTLHEYPLMKFQRSNGGKNYNQTPIVKVGEKIEKGEVLADGPAMENGELALGQNPVIAFMTWHGYNFEDAIVLNERLVRDDVYTSIHIEEHESEARDTKLGPEEITREIPNVGEDQLKDLDDSGIIRIGAEVEDGDILVGKITPKGVTELSAEERLLHAIFGEKAREVRDTSLRVPHGGGGIIQDVEIFTRENGDELAPGVNMMVRVFIAQKRKIQVGDKMAGRHGNKGTVSVVVPEEDMPFMPDGRPIDILLSPMGVPSRMNIGQILELHLGMAAKKLGIKIMTPVFDGASDDEIIDALKEAGLDEDGKTVLYDGQTGEAFDNRISVGVMHYMKLAHMVDDKIHARSIGPYSLVTQQPLGGKAQFGGQRFGEMEVWALEAYGAAYTLQEILTYKSDDVRGRNKVFESIVKGQAIPKPGVPESFRVLVKELQALGLDMKVLNGKGQEVKMAQMDEDDNVATVDALEQIAKEKPDLFKGDDDDTPRIPATKLDEENV.

The span at 581–597 shows a compositional bias: polar residues; it reads QANSPLNDDGSFTNPTV. 2 disordered regions span residues 581 to 603 and 1172 to 1197; these read QANS…RHGD and EKPD…EENV.

This sequence belongs to the RNA polymerase beta chain family. As to quaternary structure, the RNAP catalytic core consists of 2 alpha, 1 beta, 1 beta' and 1 omega subunit. When a sigma factor is associated with the core the holoenzyme is formed, which can initiate transcription.

The enzyme catalyses RNA(n) + a ribonucleoside 5'-triphosphate = RNA(n+1) + diphosphate. Functionally, DNA-dependent RNA polymerase catalyzes the transcription of DNA into RNA using the four ribonucleoside triphosphates as substrates. The polypeptide is DNA-directed RNA polymerase subunit beta (Oenococcus oeni (strain ATCC BAA-331 / PSU-1)).